Here is a 543-residue protein sequence, read N- to C-terminus: MTVANHARPIRRALLSVSDKTGILEFAKALHAQGVELLSTGGTARLLADNGVPVIEVSDYTGHPEIMDGRVKTLHPKVHGGILARRGLDENVMAANNINAIDLVAVNLYPFADTVAKAGCTLEDAIENIDIGGPTMVRAAAKNHKDVTIVVNAADYNRVLAEMAVNNGSTTHATRFDLAIAAFEHTAGYDGMIANYFGTMVPMHRVPAHSTDECFQDSLSVEGSKFPRTFNTQLVKKQDLRYGENSHQAAAFYVDTKIDEASVATAVQLQGKALSYNNIADTDAALECVKEFSEPACVIVKHANPCGVALGKDLLDAYNRAYQTDPTSAFGGIIAFNGELDAATASAIVERQFVEVIIAPVVSQGARDVVAKKTNVRLLECGQWNTKTQTLDYKRVNGGLLVQDRDQGMVGLDDIKVVTKRQPTESELKDLMFCWKVAKFVKSNAIVYAKDGMTIGVGAGQMSRVYSAKIAGIKAADEGLEVVNSVMASDAFFPFRDGIDAAAAAGISCIIQPGGSMRDAEIIAAADEHGMAMVMTGMRHFRH.

Residues asparagine 5–valine 151 enclose the MGS-like domain.

This sequence belongs to the PurH family.

The enzyme catalyses (6R)-10-formyltetrahydrofolate + 5-amino-1-(5-phospho-beta-D-ribosyl)imidazole-4-carboxamide = 5-formamido-1-(5-phospho-D-ribosyl)imidazole-4-carboxamide + (6S)-5,6,7,8-tetrahydrofolate. It carries out the reaction IMP + H2O = 5-formamido-1-(5-phospho-D-ribosyl)imidazole-4-carboxamide. It participates in purine metabolism; IMP biosynthesis via de novo pathway; 5-formamido-1-(5-phospho-D-ribosyl)imidazole-4-carboxamide from 5-amino-1-(5-phospho-D-ribosyl)imidazole-4-carboxamide (10-formyl THF route): step 1/1. The protein operates within purine metabolism; IMP biosynthesis via de novo pathway; IMP from 5-formamido-1-(5-phospho-D-ribosyl)imidazole-4-carboxamide: step 1/1. This is Bifunctional purine biosynthesis protein PurH from Shewanella oneidensis (strain ATCC 700550 / JCM 31522 / CIP 106686 / LMG 19005 / NCIMB 14063 / MR-1).